The sequence spans 357 residues: Zinc finger protein 830 (357 aa).

The segment at 47 to 69 adopts a C2H2-type zinc-finger fold; sequence CVVCNIQIKSELLWPAHILGKQH. Disordered regions lie at residues 98–126, 157–194, and 231–255; these read RKGS…TKLP, DDDE…ADRL, and ALPE…PKDQ. Residues 99–115 are compositionally biased toward basic and acidic residues; the sequence is KGSEPENQESKRIKGTE. Positions 157 to 168 are enriched in acidic residues; the sequence is DDDEVEGEEYEN. Residues 242-255 are compositionally biased toward basic and acidic residues; sequence ADAKVRKVDAPKDQ. Residues 279–325 are a coiled coil; the sequence is AEEDEEGRLDRQIDEIDEQIECYRRVEHLRDLKDTLQDAKMEVLKSK.

Its subcellular location is the nucleus. The protein localises to the chromosome. The protein resides in the nucleus speckle. Its function is as follows. May act as an important regulator of the cell cycle that participates in the maintenance of genome integrity. The polypeptide is Zinc finger protein 830 (Xenopus tropicalis (Western clawed frog)).